A 451-amino-acid polypeptide reads, in one-letter code: Bifunctional protein GlmU (451 aa).

Residues 1–229 (MQRHAIILAA…FDEIIGVNDR (229 aa)) are pyrophosphorylase. UDP-N-acetyl-alpha-D-glucosamine-binding positions include 8-11 (LAAG), Lys-22, Gln-72, and 77-78 (GT). Residue Asp-102 participates in Mg(2+) binding. 3 residues coordinate UDP-N-acetyl-alpha-D-glucosamine: Gly-139, Glu-154, and Asn-227. Asn-227 lines the Mg(2+) pocket. Residues 230–250 (LMLSEAEKALQQRINRYHMEN) are linker. Positions 251–451 (GVTIIDPSST…QVNKEGYLKK (201 aa)) are N-acetyltransferase. Residues Arg-332 and Lys-350 each coordinate UDP-N-acetyl-alpha-D-glucosamine. The Proton acceptor role is filled by His-362. Positions 365 and 376 each coordinate UDP-N-acetyl-alpha-D-glucosamine. Acetyl-CoA is bound by residues 385 to 386 (NY), Ala-422, and Arg-439.

In the N-terminal section; belongs to the N-acetylglucosamine-1-phosphate uridyltransferase family. This sequence in the C-terminal section; belongs to the transferase hexapeptide repeat family. As to quaternary structure, homotrimer. Mg(2+) serves as cofactor.

Its subcellular location is the cytoplasm. It carries out the reaction alpha-D-glucosamine 1-phosphate + acetyl-CoA = N-acetyl-alpha-D-glucosamine 1-phosphate + CoA + H(+). It catalyses the reaction N-acetyl-alpha-D-glucosamine 1-phosphate + UTP + H(+) = UDP-N-acetyl-alpha-D-glucosamine + diphosphate. Its pathway is nucleotide-sugar biosynthesis; UDP-N-acetyl-alpha-D-glucosamine biosynthesis; N-acetyl-alpha-D-glucosamine 1-phosphate from alpha-D-glucosamine 6-phosphate (route II): step 2/2. It functions in the pathway nucleotide-sugar biosynthesis; UDP-N-acetyl-alpha-D-glucosamine biosynthesis; UDP-N-acetyl-alpha-D-glucosamine from N-acetyl-alpha-D-glucosamine 1-phosphate: step 1/1. The protein operates within bacterial outer membrane biogenesis; LPS lipid A biosynthesis. Catalyzes the last two sequential reactions in the de novo biosynthetic pathway for UDP-N-acetylglucosamine (UDP-GlcNAc). The C-terminal domain catalyzes the transfer of acetyl group from acetyl coenzyme A to glucosamine-1-phosphate (GlcN-1-P) to produce N-acetylglucosamine-1-phosphate (GlcNAc-1-P), which is converted into UDP-GlcNAc by the transfer of uridine 5-monophosphate (from uridine 5-triphosphate), a reaction catalyzed by the N-terminal domain. This chain is Bifunctional protein GlmU, found in Staphylococcus epidermidis.